An 82-amino-acid polypeptide reads, in one-letter code: Protein C2 (82 aa).

The sequence is that of Protein C2 (C2) from Sterkiella nova (Ciliate).